A 453-amino-acid chain; its full sequence is Serine/threonine-protein phosphatase 2A regulatory subunit B'' subunit gamma (453 aa).

Residues M1–L27 form a disordered region. EF-hand domains follow at residues P273–N308 and K341–L376. Residues D286, D288, N290, M292, and E297 each coordinate Ca(2+).

In terms of assembly, interacts with MCM3AP/GANP, PPP5C, and the phosphatase 2A core enzyme composed of the PPP2CA catalytic subunit and the constant regulatory subunit PPP2R1A. Finds in a complex with ABCB1, TFPI2 and PPP2R3C; leading to the dephosphorylation of ABCB1.

The protein localises to the nucleus. Its subcellular location is the cytoplasm. May regulate MCM3AP phosphorylation through phosphatase recruitment. May act as a negative regulator of ABCB1 expression and function through the dephosphorylation of ABCB1 by TFPI2/PPP2R3C complex. May play a role in the activation-induced cell death of B-cells. The sequence is that of Serine/threonine-protein phosphatase 2A regulatory subunit B'' subunit gamma (Ppp2r3c) from Rattus norvegicus (Rat).